Consider the following 204-residue polypeptide: NADH-quinone oxidoreductase subunit C (204 aa).

It belongs to the complex I 30 kDa subunit family. In terms of assembly, NDH-1 is composed of 14 different subunits. Subunits NuoB, C, D, E, F, and G constitute the peripheral sector of the complex.

The protein resides in the cell inner membrane. It carries out the reaction a quinone + NADH + 5 H(+)(in) = a quinol + NAD(+) + 4 H(+)(out). NDH-1 shuttles electrons from NADH, via FMN and iron-sulfur (Fe-S) centers, to quinones in the respiratory chain. The immediate electron acceptor for the enzyme in this species is believed to be ubiquinone. Couples the redox reaction to proton translocation (for every two electrons transferred, four hydrogen ions are translocated across the cytoplasmic membrane), and thus conserves the redox energy in a proton gradient. The protein is NADH-quinone oxidoreductase subunit C of Vesicomyosocius okutanii subsp. Calyptogena okutanii (strain HA).